Consider the following 311-residue polypeptide: MQAPPPEHCPGVESEQAGKGSACAGCPNQGVCSDPNKKLEDPGKALVVESMKDVSNKLLILSGKGGVGKSTVTSLLTRYLARSNPDSNFGVLDIDICGPSQPRLMGALGESVHQSGYGWSPVGIEDNVCLMSIGFLLDSVDDAIIWRGPKKNGMIRQFLSEVDWGNLDLLLLDTPPGTSDEHLSVVSYLKDDTNPESLRAVMVTTPQEVSLLDVRKEINFCKKQNIPIVGVIENMSSFRCGHCGNSSEIFPAKTGGAAAMCAEMGIPLLGSLPLDQQISKACDSGEDLTEFKNVTTEALEGICSKIMASFS.

4 residues coordinate [4Fe-4S] cluster: C9, C23, C26, and C32. 63 to 70 (GKGGVGKS) provides a ligand contact to ATP. Positions 240 and 243 each coordinate [4Fe-4S] cluster.

Belongs to the Mrp/NBP35 ATP-binding proteins family. NUBP1/NBP35 subfamily. Heterotetramer of 2 Nubp1 and 2 Nubp2 chains. [4Fe-4S] cluster serves as cofactor.

It is found in the cytoplasm. Its function is as follows. Component of the cytosolic iron-sulfur (Fe/S) protein assembly (CIA) machinery. Required for maturation of extramitochondrial Fe-S proteins. The Nubp1-Nubp2 heterotetramer forms a Fe-S scaffold complex, mediating the de novo assembly of an Fe-S cluster and its transfer to target apoproteins. This is Cytosolic Fe-S cluster assembly factor Nubp1 homolog from Drosophila yakuba (Fruit fly).